We begin with the raw amino-acid sequence, 125 residues long: Napin-3 (125 aa).

4 disulfides stabilise this stretch: Cys-10–Cys-62, Cys-23–Cys-51, Cys-52–Cys-107, and Cys-64–Cys-115.

Belongs to the 2S seed storage albumins family. In terms of assembly, the mature protein consists of a small and a large chain linked by disulfide bonds.

Its function is as follows. The small, basic, water-soluble napins are one of the two major kinds of storage proteins synthesized in the seed during its maturation. This Brassica napus (Rape) protein is Napin-3.